Here is a 97-residue protein sequence, read N- to C-terminus: UPF0235 protein Aasi_0294 (97 aa).

Belongs to the UPF0235 family.

The sequence is that of UPF0235 protein Aasi_0294 from Amoebophilus asiaticus (strain 5a2).